Reading from the N-terminus, the 485-residue chain is E3 ubiquitin-protein ligase rnf8 (485 aa).

Residues 43–97 enclose the FHA domain; that stretch reads VSVGRGLNVTHQILSSSCPLMISRIHCVFKLNEGRQWTVTDNKSLNGVWVNGKRI. A disordered region spans residues 150–232; the sequence is AASLSQKLKN…SSTCSDSSQH (83 aa). Positions 199-219 are enriched in basic and acidic residues; it reads GERRETLKLSSRPLEEDRDKA. Low complexity predominate over residues 221-230; sequence SSSSTCSDSS. The segment at 392 to 430 adopts an RING-type zinc-finger fold; the sequence is CSICSELFIEAVTLNCAHSFCQHCISEWRNRKDKCPMCW.

The protein belongs to the RNF8 family. Homodimer. Forms a E2-E3 ubiquitin ligase complex composed of the rnf8 homodimer and a E2 heterodimer of ube2n and ube2v2.

Its subcellular location is the nucleus. The enzyme catalyses S-ubiquitinyl-[E2 ubiquitin-conjugating enzyme]-L-cysteine + [acceptor protein]-L-lysine = [E2 ubiquitin-conjugating enzyme]-L-cysteine + N(6)-ubiquitinyl-[acceptor protein]-L-lysine.. It participates in protein modification; protein ubiquitination. Functionally, E3 ubiquitin-protein ligase that plays a key role in DNA damage signaling via 2 distinct roles: by mediating the 'Lys-63'-linked ubiquitination of histones H2A and H2AX and promoting the recruitment of DNA repair proteins at double-strand breaks (DSBs) sites, and by catalyzing 'Lys-48'-linked ubiquitination to remove target proteins from DNA damage sites. Following DNA DSBs, it is recruited to the sites of damage by ATM-phosphorylated mdc1 and catalyzes the 'Lys-63'-linked ubiquitination of histones H2A and H2AX. H2A ubiquitination also mediates the ATM-dependent transcriptional silencing at regions flanking DSBs in cis, a mechanism to avoid collision between transcription and repair intermediates. Also catalyzes the formation of 'Lys-48'-linked polyubiquitin chains, leading to degradation of substrate proteins. In addition to its function in damage signaling, also plays a role in higher-order chromatin structure by mediating extensive chromatin decondensation. This is E3 ubiquitin-protein ligase rnf8 from Danio rerio (Zebrafish).